The primary structure comprises 516 residues: Cytochrome P450 monooxygenase otaC (516 aa).

The chain crosses the membrane as a helical span at residues phenylalanine 13 to valine 30. Cysteine 454 is a binding site for heme.

Belongs to the cytochrome P450 family. It depends on heme as a cofactor.

The protein localises to the membrane. It catalyses the reaction 7-methylmellein + 3 reduced [NADPH--hemoprotein reductase] + 3 O2 = 7-carboxymellein + 3 oxidized [NADPH--hemoprotein reductase] + 4 H2O + 4 H(+). It participates in mycotoxin biosynthesis. In terms of biological role, cytochrome P450 monooxygenase; part of the gene cluster that mediates the biosynthesis of ochratoxin A (OTA), a mycotoxin composed of a chlorinated type I polyketide dihydroisocoumarin moiety linked to L-phenylalanine, and demonstrated to have nephrotoxic, immunotoxic, genotoxic, neurotoxic, and teratogenic properties. OtaC catalyzes the oxidation of 7-methylmellein (7-MM) into 7-carboxymellein. The pathway begins with the highly reducing polyketide synthase otaA that catalyzes the formation of the isocoumarin group during the initial stages of biosynthesis, starting from one acetate and 4 malonate units, to originate the characteristic pentaketide skeleton 7-methylmellein (7-MM) of the OTA molecule. The newly identified cyclase otaY might be involved in the polyketide cyclization reaction during the initial steps of the OTA biosynthesis. 7-MM is then oxidized into 7-carboxymellein (also called ochratoxin beta) by the cytochrome P450 monooxygenase otaC. The NRPS encoded by the otaB gene is involved in the linking of phenylalanine to the dihydroisocoumarin ring. The reaction catalyzed by NRPS results in the production of ochratoxin B (OTB), which is the non-chlorinated analog of OTA and which subsequently serves as the substrate of the halogenase otaD for chlorination activity to form the final molecular structure of OTA, containing a chlorine atom in the C-5 position of the molecule. The sequence is that of Cytochrome P450 monooxygenase otaC from Aspergillus carbonarius (strain ITEM 5010).